A 474-amino-acid chain; its full sequence is Protein nucleotidyltransferase YdiU (474 aa).

Residues G89, G91, R92, K112, D124, G125, R175, and R182 each coordinate ATP. The Proton acceptor role is filled by D256. Residues N257 and D266 each coordinate Mg(2+). D266 contacts ATP.

Belongs to the SELO family. The cofactor is Mg(2+). Mn(2+) serves as cofactor.

It carries out the reaction L-seryl-[protein] + ATP = 3-O-(5'-adenylyl)-L-seryl-[protein] + diphosphate. The enzyme catalyses L-threonyl-[protein] + ATP = 3-O-(5'-adenylyl)-L-threonyl-[protein] + diphosphate. The catalysed reaction is L-tyrosyl-[protein] + ATP = O-(5'-adenylyl)-L-tyrosyl-[protein] + diphosphate. It catalyses the reaction L-histidyl-[protein] + UTP = N(tele)-(5'-uridylyl)-L-histidyl-[protein] + diphosphate. It carries out the reaction L-seryl-[protein] + UTP = O-(5'-uridylyl)-L-seryl-[protein] + diphosphate. The enzyme catalyses L-tyrosyl-[protein] + UTP = O-(5'-uridylyl)-L-tyrosyl-[protein] + diphosphate. Its function is as follows. Nucleotidyltransferase involved in the post-translational modification of proteins. It can catalyze the addition of adenosine monophosphate (AMP) or uridine monophosphate (UMP) to a protein, resulting in modifications known as AMPylation and UMPylation. This chain is Protein nucleotidyltransferase YdiU, found in Corynebacterium glutamicum (strain ATCC 13032 / DSM 20300 / JCM 1318 / BCRC 11384 / CCUG 27702 / LMG 3730 / NBRC 12168 / NCIMB 10025 / NRRL B-2784 / 534).